The primary structure comprises 779 residues: MVSLSFILCCVLVSSCAYATIVSHDGRAITIDGHRRVLLSGSIHYPRSTTEMWPDLIKKGKEGSLDAIETYVFWNAHEPTRRQYDFSGNLDLIRFLKTIQNEGMYGVLRIGPYVCAEWNYGGFPVWLHNMPGMEFRTTNTAFMNEMQNFTTMIVEMVKKEKLFASQGGPIILAQIENEYGNVIGSYGEAGKAYIQWCANMANSLDVGVPWIMCQQDDAPQPMLNTCNGYYCDNFSPNNPNTPKMWTENWTGWYKNWGGKDPHRTTEDVAFAVARFFQKEGTFQNYYMYHGGTNFDRTAGGPYITTTYDYDAPLDEFGNLNQPKYGHLKQLHDVLHAMEKTLTYGNISTVDFGNLVTATVYQTEEGSSCFIGNVNETSDAKINFQGTSYDVPAWSVSILPDCKTETYNTAKINTQTSVMVKKANEAENEPSTLKWSWRPENIDSVLLKGKGESTMRQLFDQKVVSNDESDYLWYMTTVNLKEQDPVLGKNMSLRINSTAHVLHAFVNGQHIGNYRVENGKFHYVFEQDAKFNPGANVITLLSITVGLPNYGAFFENFSAGITGPVFIIGRNGDETIVKDLSTHKWSYKTGLSGFENQLFSSESPSTWSAPLGSEPVVVDLLGLGKGTAWINGNNIGRYWPAFLSDIDGCSAEYHVPRSFLNSEGDNTLVLFEEIGGNPSLVNFQTIGVGSVCANVYEKNVLELSCNGKPISAIKFASFGNPGGDCGSFEKGTCEASNNAAAILTQECVGKEKCSIDVSEDKFGAAECGALAKRLAVEAIC.

The signal sequence occupies residues 1-19 (MVSLSFILCCVLVSSCAYA). An N-linked (GlcNAc...) asparagine glycan is attached at N148. E178 (proton donor) is an active-site residue. The active-site Nucleophile is the E247. N248, N345, N374, N489, N495, and N555 each carry an N-linked (GlcNAc...) asparagine glycan. The SUEL-type lectin domain occupies 694 to 779 (VYEKNVLELS…AKRLAVEAIC (86 aa)).

It belongs to the glycosyl hydrolase 35 family. In terms of tissue distribution, ubiquitous, with higher levels in roots and siliques.

It localises to the secreted. The protein localises to the extracellular space. The protein resides in the apoplast. The enzyme catalyses Hydrolysis of terminal non-reducing beta-D-galactose residues in beta-D-galactosides.. The polypeptide is Beta-galactosidase 15 (BGAL15) (Arabidopsis thaliana (Mouse-ear cress)).